The chain runs to 351 residues: Modulator of apoptosis 1 (351 aa).

Residues 49–52 (YRLL) carry the LIR motif. The tract at residues 120–127 (LTRALAHE) is BH3-like. The segment at 202-205 (KRRR) is RASSF1-binding.

It belongs to the PNMA family. Homodimer. Under normal circumstances, held in an inactive conformation by an intramolecular interaction. Interacts with BAX. Binding to RASSF1 isoform A (RASSF1A) relieves this inhibitory interaction and allows further binding to BAX. Also binds to BCL2 and BCLX. Recruited to the TNFRSF1A and TNFRSF10A complexes in response to their respective cognate ligand, after internalization. Interacts with TRIM39. Interacts with RASSF6. Interacts with ATG8 proteins MAP1LC3A, MAP1LC3B and MAP1LC3C. Does not interact with ATG8 proteins GABARAPL1, GABARAPL2 and GABARAP. Interacts with SQSTM1; promoting dissociation of SQSTM1 inclusion bodies that sequester KEAP1. Post-translationally, ubiquitinated and degraded during mitotic exit by APC/C-Cdh1, this modification is inhibited by TRIM39.

The protein localises to the cytoplasm. It is found in the cytosol. It localises to the mitochondrion outer membrane. The protein resides in the extracellular vesicle membrane. Functionally, retrotransposon-derived protein that forms virion-like capsids. Acts as an effector of BAX during apoptosis: enriched at outer mitochondria membrane and associates with BAX upon induction of apoptosis, facilitating BAX-dependent mitochondrial outer membrane permeabilization and apoptosis. Required for death receptor-dependent apoptosis. When associated with RASSF1, promotes BAX conformational change and translocation to mitochondrial membranes in response to TNF and TNFSF10 stimulation. Also promotes autophagy: promotes phagophore closure via association with ATG8 proteins. Acts as an inhibitor of the NFE2L2/NRF2 pathway via interaction with SQSTM1: interaction promotes dissociation of SQSTM1 inclusion bodies that sequester KEAP1, relieving inactivation of the BCR(KEAP1) complex. In Macaca fascicularis (Crab-eating macaque), this protein is Modulator of apoptosis 1.